Consider the following 190-residue polypeptide: Shikimate kinase (190 aa).

26–31 lines the ATP pocket; it reads GSGKST. Ser-30 lines the Mg(2+) pocket. Substrate is bound by residues Asp-48, Arg-72, and Gly-94. Arg-133 contacts ATP. Arg-152 is a substrate binding site.

Belongs to the shikimate kinase family. As to quaternary structure, monomer. Mg(2+) is required as a cofactor.

It localises to the cytoplasm. It catalyses the reaction shikimate + ATP = 3-phosphoshikimate + ADP + H(+). It participates in metabolic intermediate biosynthesis; chorismate biosynthesis; chorismate from D-erythrose 4-phosphate and phosphoenolpyruvate: step 5/7. Its function is as follows. Catalyzes the specific phosphorylation of the 3-hydroxyl group of shikimic acid using ATP as a cosubstrate. This Prochlorococcus marinus (strain SARG / CCMP1375 / SS120) protein is Shikimate kinase.